The following is a 577-amino-acid chain: Insulin-like growth factor 2 mRNA-binding protein 1 (577 aa).

2 consecutive RRM domains span residues 2–75 (NKLY…HSVP) and 81–156 (RKIQ…YIPD). A phosphoserine mark is found at Ser-12 and Ser-73. Residues 156-190 (DEQITQGPENGRRGGFGSRGQPRQGSPVAAGAPAK) are disordered. Phosphoserine; by MTOR is present on Ser-181. 4 KH domains span residues 195 to 260 (DIPL…CKMI), 276 to 343 (EVPL…EQEI), 405 to 470 (QEMV…QGRI), and 487 to 553 (KLET…QRKI). The sufficient for nuclear export stretch occupies residues 312-323 (ISSLQDLTLYNP). The sufficient for nuclear export stretch occupies residues 485–495 (EVKLETHIRVP). At Thr-528 the chain carries Phosphothreonine.

Belongs to the RRM IMP/VICKZ family. In terms of assembly, can form homodimers and heterodimers with IGF2BP1 and IGF2BP3. Component of the coding region determinant (CRD)-mediated complex, composed of DHX9, HNRNPU, IGF2BP1, SYNCRIP and YBX1. Identified in a mRNP complex, at least composed of DHX9, DDX3X, ELAVL1, HNRNPU, IGF2BP1, ILF3, PABPC1, PCBP2, PTBP2, STAU1, STAU2, SYNCRIP and YBX1. Associates with mRNP complex. Interacts with FMR1. Component of a multisubunit autoregulatory RNP complex (ARC), at least composed of IGF2BP1, PABPC1 and CSDE1. Interacts with AGO1 and AGO2. Interacts, through domains KH3 and KH4, with PABPC1 in an RNA-independent manner. Component of a TAU mRNP complex, at least composed of IGF2BP1, ELAVL4 and G3BP. Interacts with ELAVL4 in an RNA-dependent manner. Associates with microtubules and polysomes. Interacts with ELAVL1 and MATR3. In terms of processing, phosphorylated at Ser-181 by mTORC2 cotranslationally, promoting binding to the 3'-UTR of IGF2 mRNA. In terms of tissue distribution, expressed in zygotes and blastocysts (at protein level). Expressed in brain, skeletal muscle, trophoblasts of placenta, oocytes and spermatogonia (at protein level). Expressed in testis and ovary. Following colon injury, expressed in the wound bed mesenchyme during the first phase of repair, probably by colonic mesenchymal stem cells (at protein level).

The protein localises to the nucleus. The protein resides in the cytoplasm. It localises to the perinuclear region. It is found in the P-body. Its subcellular location is the stress granule. The protein localises to the cell projection. The protein resides in the lamellipodium. It localises to the dendrite. It is found in the dendritic spine. Its subcellular location is the growth cone. The protein localises to the filopodium. The protein resides in the axon. Functionally, RNA-binding factor that recruits target transcripts to cytoplasmic protein-RNA complexes (mRNPs). This transcript 'caging' into mRNPs allows mRNA transport and transient storage. It also modulates the rate and location at which target transcripts encounter the translational apparatus and shields them from endonuclease attacks or microRNA-mediated degradation. Preferentially binds to N6-methyladenosine (m6A)-containing mRNAs and increases their stability. Regulates localized beta-actin/ACTB mRNA translation, a crucial process for cell polarity, cell migration and neurite outgrowth. Co-transcriptionally associates with the ACTB mRNA in the nucleus. This binding involves a conserved 54-nucleotide element in the ACTB mRNA 3'-UTR, known as the 'zipcode'. The RNP thus formed is exported to the cytoplasm, binds to a motor protein and is transported along the cytoskeleton to the cell periphery. During transport, prevents ACTB mRNA from being translated into protein. When the RNP complex reaches its destination near the plasma membrane, IGF2BP1 is phosphorylated. This releases the mRNA, allowing ribosomal 40S and 60S subunits to assemble and initiate ACTB protein synthesis. Monomeric ACTB then assembles into the subcortical actin cytoskeleton. During neuronal development, key regulator of neurite outgrowth, growth cone guidance and neuronal cell migration, presumably through the spatiotemporal fine tuning of protein synthesis, such as that of ACTB. May regulate mRNA transport to activated synapses. Binds to the 3'-UTR of CD44 mRNA and stabilizes it, hence promotes cell adhesion and invadopodia formation in cancer cells. Binds to the oncofetal H19 transcript and regulates its localization. Binds to and stabilizes BTRC/FBW1A mRNA. Binds to the adenine-rich autoregulatory sequence (ARS) located in PABPC1 mRNA and represses its translation. PABPC1 mRNA-binding is stimulated by PABPC1 protein. Prevents BTRC/FBW1A mRNA degradation by disrupting microRNA-dependent interaction with AGO2. During cellular stress, such as oxidative stress or heat shock, stabilizes target mRNAs that are recruited to stress granules, including CD44, IGF2, MAPK4, MYC, PTEN, RAPGEF2 and RPS6KA5 transcripts. Interacts with GAP43 transcript and transports it to axons. Binds to the 3'-UTR of IGF2 mRNA by a mechanism of cooperative and sequential dimerization and regulates IGF2 mRNA subcellular localization and translation. Binds to MYC mRNA, in the coding region instability determinant (CRD) of the open reading frame (ORF), hence prevents MYC cleavage by endonucleases and possibly microRNA targeting to MYC-CRD. Binding to MYC mRNA is enhanced by m6A-modification of the CRD. Binds to and stabilizes ABCB1/MDR-1 mRNA. Binds to the neuron-specific TAU mRNA and regulates its localization. Plays a direct role in the transport and translation of transcripts required for axonal regeneration in adult sensory neurons. During interstinal wound repair, interacts with and stabilizes PTGS2 transcript. PTGS2 mRNA stabilization may be crucial for colonic mucosal wound healing. The polypeptide is Insulin-like growth factor 2 mRNA-binding protein 1 (Igf2bp1) (Mus musculus (Mouse)).